The sequence spans 564 residues: Potassium-transporting ATPase potassium-binding subunit (564 aa).

A run of 10 helical transmembrane segments spans residues 7-27 (LLILAFLVLLLAPAPWLGRFF), 67-87 (AWALLAFNLAGFVVLFAMLML), 135-155 (VGLTVQNFVSAATGLAVLVAL), 179-199 (LYALLPISIVLAVFLVWQGVP), 258-278 (FELVSILLIPAALVFTFGHYV), 286-306 (AILGCMLALLLIGGAVSLWAE), 382-402 (VGLNGMVLNVLIAVFLAGLMI), 420-440 (LLVATLLVMPVGVLVLGAIAA), 487-507 (LMLSLAIFIGRFGYILPVLAL), and 528-548 (GLLFVTLLTVTILLVGGLTFL).

Belongs to the KdpA family. The system is composed of three essential subunits: KdpA, KdpB and KdpC.

The protein localises to the cell inner membrane. Functionally, part of the high-affinity ATP-driven potassium transport (or Kdp) system, which catalyzes the hydrolysis of ATP coupled with the electrogenic transport of potassium into the cytoplasm. This subunit binds the periplasmic potassium ions and delivers the ions to the membrane domain of KdpB through an intramembrane tunnel. This is Potassium-transporting ATPase potassium-binding subunit from Pseudomonas syringae pv. tomato (strain ATCC BAA-871 / DC3000).